Reading from the N-terminus, the 349-residue chain is Nicotinate-nucleotide--dimethylbenzimidazole phosphoribosyltransferase (349 aa).

Glu-313 functions as the Proton acceptor in the catalytic mechanism.

It belongs to the CobT family.

It catalyses the reaction 5,6-dimethylbenzimidazole + nicotinate beta-D-ribonucleotide = alpha-ribazole 5'-phosphate + nicotinate + H(+). The protein operates within nucleoside biosynthesis; alpha-ribazole biosynthesis; alpha-ribazole from 5,6-dimethylbenzimidazole: step 1/2. In terms of biological role, catalyzes the synthesis of alpha-ribazole-5'-phosphate from nicotinate mononucleotide (NAMN) and 5,6-dimethylbenzimidazole (DMB). In Mycobacterium avium (strain 104), this protein is Nicotinate-nucleotide--dimethylbenzimidazole phosphoribosyltransferase.